The following is a 98-amino-acid chain: NADH-ubiquinone oxidoreductase chain 4L (98 aa).

A run of 3 helical transmembrane segments spans residues 1–21 (MTLI…GLLM), 29–49 (ALLC…LTIL), and 61–81 (IILL…LVTI).

Belongs to the complex I subunit 4L family. In terms of assembly, core subunit of respiratory chain NADH dehydrogenase (Complex I) which is composed of 45 different subunits.

Its subcellular location is the mitochondrion inner membrane. It catalyses the reaction a ubiquinone + NADH + 5 H(+)(in) = a ubiquinol + NAD(+) + 4 H(+)(out). In terms of biological role, core subunit of the mitochondrial membrane respiratory chain NADH dehydrogenase (Complex I) which catalyzes electron transfer from NADH through the respiratory chain, using ubiquinone as an electron acceptor. Part of the enzyme membrane arm which is embedded in the lipid bilayer and involved in proton translocation. This chain is NADH-ubiquinone oxidoreductase chain 4L (MT-ND4L), found in Eubalaena australis (Southern right whale).